A 213-amino-acid chain; its full sequence is Probable thiopurine S-methyltransferase (213 aa).

S-adenosyl-L-methionine is bound by residues Trp-10, Leu-45, Glu-66, and Arg-125.

This sequence belongs to the class I-like SAM-binding methyltransferase superfamily. TPMT family.

The protein resides in the cytoplasm. It carries out the reaction S-adenosyl-L-methionine + a thiopurine = S-adenosyl-L-homocysteine + a thiopurine S-methylether.. In Yarrowia lipolytica (strain CLIB 122 / E 150) (Yeast), this protein is Probable thiopurine S-methyltransferase.